The chain runs to 128 residues: Protein Wnt-2b-B (128 aa).

Intrachain disulfides connect C3–C16 and C5–C11. Residue S8 is the site of O-palmitoleoyl serine; by PORCN attachment. N-linked (GlcNAc...) asparagine glycosylation is present at N48. Intrachain disulfides connect C90-C105 and C127-C128.

This sequence belongs to the Wnt family. Post-translationally, palmitoleoylation is required for efficient binding to frizzled receptors. Depalmitoleoylation leads to Wnt signaling pathway inhibition.

It localises to the secreted. It is found in the extracellular space. Its subcellular location is the extracellular matrix. In terms of biological role, ligand for members of the frizzled family of seven transmembrane receptors. Functions in the canonical Wnt/beta-catenin signaling pathway. The chain is Protein Wnt-2b-B (wnt2b-b) from Xenopus laevis (African clawed frog).